A 505-amino-acid polypeptide reads, in one-letter code: Glycerol kinase 3 (505 aa).

ADP is bound at residue Thr-12. ATP-binding residues include Thr-12, Thr-13, and Ser-14. Thr-12 serves as a coordination point for sn-glycerol 3-phosphate. Arg-16 provides a ligand contact to ADP. Sn-glycerol 3-phosphate contacts are provided by Arg-82, Glu-83, Tyr-134, and Asp-249. Residues Arg-82, Glu-83, Tyr-134, Asp-249, and Gln-250 each contribute to the glycerol site. ADP-binding residues include Thr-271 and Gly-315. Positions 271, 315, 319, and 416 each coordinate ATP. Residues Gly-416 and Asn-420 each coordinate ADP.

Belongs to the FGGY kinase family.

The enzyme catalyses glycerol + ATP = sn-glycerol 3-phosphate + ADP + H(+). It participates in polyol metabolism; glycerol degradation via glycerol kinase pathway; sn-glycerol 3-phosphate from glycerol: step 1/1. Inhibited by fructose 1,6-bisphosphate (FBP). Key enzyme in the regulation of glycerol uptake and metabolism. Catalyzes the phosphorylation of glycerol to yield sn-glycerol 3-phosphate. This Streptomyces avermitilis (strain ATCC 31267 / DSM 46492 / JCM 5070 / NBRC 14893 / NCIMB 12804 / NRRL 8165 / MA-4680) protein is Glycerol kinase 3.